Here is a 636-residue protein sequence, read N- to C-terminus: DNA-dependent metalloprotease SPRTN (636 aa).

Residues 19–42 are disordered; it reads QETPAAGWPDEDCPSSKRRRVDPS. Positions 76–183 constitute a SprT-like domain; the sequence is RAMFLQFNDK…ASGTNITIYH (108 aa). Residue H141 participates in Zn(2+) binding. Residue E142 is part of the active site. Zn(2+) contacts are provided by H145 and H160. Disordered regions lie at residues 238–382 and 398–430; these read TYTK…GKQR and RGASAVGSSKSSTDASTADYRSNSALDAKPSGK. The span at 241–268 shows a compositional bias: basic and acidic residues; sequence KIKEPENYGKTGKSDKQRDKMPATEMPK. Low complexity predominate over residues 272–281; that stretch reads PPSSTSSSGS. Positions 290 to 298 match the SHP-box motif; sequence FSGRGFVLG. Polar residues predominate over residues 302 to 311; the sequence is QIPTNKQIQS. The span at 313 to 327 shows a compositional bias: pro residues; that stretch reads PKAPPEPLHSPPDSP. Over residues 341-374 the composition is skewed to polar residues; the sequence is RLSSGTSNIPRKRSVGNTNAFINVNGSPVRISNG. Low complexity predominate over residues 399–416; it reads GASAVGSSKSSTDASTAD. Positions 451–458 match the PIP-box motif; that stretch reads ESNISKYF. Positions 473–608 are disordered; sequence TFGSPQKSAI…VRDQQANNPP (136 aa). Polar residues-rich tracts occupy residues 492-523 and 545-554; these read FGSNQRPDSTSSGIRNTGSPQRSHASATSGSS and SPRTSGTTPS. Positions 535–566 match the Nuclear localization signal motif; that stretch reads SNFPSPRNIGSPRTSGTTPSGAKKRSWEEHNS. Basic and acidic residues-rich tracts occupy residues 559-570 and 584-593; these read RSWEEHNSERVF and TDKKREEVRS. The UBZ4-type zinc finger occupies 612 to 636; that stretch reads TVHCPVCHIRLPESTINDHLDSCLL. Residues C615, C618, H630, and C634 each contribute to the Zn(2+) site.

The protein belongs to the Spartan family. Homodimer. It depends on Zn(2+) as a cofactor. In terms of processing, autocatalytically cleaved in response to double-stranded DNA-binding: autocatalytic cleavage takes place in trans and leads to inactivation.

It is found in the nucleus. It localises to the chromosome. With respect to regulation, DNA-binding activates the protease activity: single-stranded DNA-binding specifically activates ability to cleave covalent DNA-protein cross-links (DPCs). In contrast, double-stranded DNA-binding specifically activates autocatalytic cleavage, and subsequent inactivation. Functionally, DNA-dependent metalloendopeptidase that mediates the proteolytic cleavage of covalent DNA-protein cross-links (DPCs) during DNA synthesis, thereby playing a key role in maintaining genomic integrity. DPCs are highly toxic DNA lesions that interfere with essential chromatin transactions, such as replication and transcription, and which are induced by reactive agents, such as UV light or formaldehyde. Associates with the DNA replication machinery and specifically removes DPCs during DNA synthesis. Catalyzes proteolytic cleavage of the hmces DNA-protein cross-link following unfolding by the brip1/fancj helicase. Acts as a pleiotropic protease for DNA-binding proteins cross-linked with DNA, such as top1, top2a, histones H3 and H4. Mediates degradation of DPCs that are not ubiquitinated, while it is not able to degrade ubiquitinated DPCs. SPRTN activation requires polymerase collision with DPCs followed by helicase bypass of DPCs. May also act as a 'reader' of ubiquitinated pcna: facilitates chromatin association of rad18 and is required for efficient pcna monoubiquitination, promoting a feed-forward loop to enhance pcna ubiquitination and translesion DNA synthesis. Acts as a regulator of translesion DNA synthesis by recruiting vcp/p97 to sites of DNA damage. The chain is DNA-dependent metalloprotease SPRTN from Danio rerio (Zebrafish).